The primary structure comprises 247 residues: ATP synthase subunit a, chloroplastic (247 aa).

Helical transmembrane passes span 38–58 (QVLI…ALAV), 95–115 (VPFI…GALL), 134–154 (INTT…AGLA), 199–219 (LVVV…VMFL), and 220–240 (GLFT…AYIG).

The protein belongs to the ATPase A chain family. As to quaternary structure, F-type ATPases have 2 components, CF(1) - the catalytic core - and CF(0) - the membrane proton channel. CF(1) has five subunits: alpha(3), beta(3), gamma(1), delta(1), epsilon(1). CF(0) has four main subunits: a, b, b' and c.

It is found in the plastid. Its subcellular location is the chloroplast thylakoid membrane. Its function is as follows. Key component of the proton channel; it plays a direct role in the translocation of protons across the membrane. This chain is ATP synthase subunit a, chloroplastic, found in Trachelium caeruleum (Blue throatwort).